Reading from the N-terminus, the 762-residue chain is 5-methyltetrahydropteroyltriglutamate--homocysteine methyltransferase (762 aa).

Residues 18 to 21 (REWK) and K112 each bind 5-methyltetrahydropteroyltri-L-glutamate. Residues 435-437 (IGS) and E488 contribute to the L-homocysteine site. L-methionine is bound by residues 435 to 437 (IGS) and E488. Residues 519 to 520 (RC) and W565 each bind 5-methyltetrahydropteroyltri-L-glutamate. D603 serves as a coordination point for L-homocysteine. D603 contributes to the L-methionine binding site. Position 609 (E609) interacts with 5-methyltetrahydropteroyltri-L-glutamate. Residues H645, C647, and E669 each coordinate Zn(2+). H698 functions as the Proton donor in the catalytic mechanism. An S-bacillithiol cysteine disulfide modification is found at C719. Zn(2+) is bound at residue C730.

This sequence belongs to the vitamin-B12 independent methionine synthase family. Requires Zn(2+) as cofactor. In response to oxidative stress, Cys-719 can react with bacillithiol (BSH) to form mixed disulfides. S-bacillithiolation leads to loss of catalytic activity and methionine auxotrophy.

It carries out the reaction 5-methyltetrahydropteroyltri-L-glutamate + L-homocysteine = tetrahydropteroyltri-L-glutamate + L-methionine. It participates in amino-acid biosynthesis; L-methionine biosynthesis via de novo pathway; L-methionine from L-homocysteine (MetE route): step 1/1. Functionally, catalyzes the transfer of a methyl group from 5-methyltetrahydrofolate to homocysteine resulting in methionine formation. This Bacillus subtilis (strain 168) protein is 5-methyltetrahydropteroyltriglutamate--homocysteine methyltransferase.